A 447-amino-acid polypeptide reads, in one-letter code: Tubulin beta chain (447 aa).

GTP is bound by residues Gln-11, Glu-69, Ser-138, Gly-142, Thr-143, Gly-144, Asn-204, and Asn-226. Glu-69 provides a ligand contact to Mg(2+). A disordered region spans residues 427–447 (DAGIDEEEEEYEEELPLEGEE). Acidic residues predominate over residues 429 to 447 (GIDEEEEEYEEELPLEGEE).

It belongs to the tubulin family. Dimer of alpha and beta chains. A typical microtubule is a hollow water-filled tube with an outer diameter of 25 nm and an inner diameter of 15 nM. Alpha-beta heterodimers associate head-to-tail to form protofilaments running lengthwise along the microtubule wall with the beta-tubulin subunit facing the microtubule plus end conferring a structural polarity. Microtubules usually have 13 protofilaments but different protofilament numbers can be found in some organisms and specialized cells. Mg(2+) is required as a cofactor.

It is found in the cytoplasm. Its subcellular location is the cytoskeleton. In terms of biological role, tubulin is the major constituent of microtubules, a cylinder consisting of laterally associated linear protofilaments composed of alpha- and beta-tubulin heterodimers. Microtubules grow by the addition of GTP-tubulin dimers to the microtubule end, where a stabilizing cap forms. Below the cap, tubulin dimers are in GDP-bound state, owing to GTPase activity of alpha-tubulin. This is Tubulin beta chain (TUB2) from Hapsidospora chrysogena (Acremonium chrysogenum).